Here is a 200-residue protein sequence, read N- to C-terminus: MLRYLGPKLKKLKRLNIHMQPEFSTKYFILNTNKYNNKMILSFYLLELFEKQKLKFTFSLSEKIIKKYILFMHKYNYKKFNLINIIEIRLDNTIFNLGYSITIAQAKQLIIHGYFFVNFKLIKIPSFLLKKGDIITLSPKSYYIFKLCKKNLYKKYIKNSNIYDTIYICKNTLISIIYSILNIYNNNNYNNILIMKYYSY.

The S4 RNA-binding domain occupies 88–148; the sequence is IRLDNTIFNL…PKSYYIFKLC (61 aa).

The protein belongs to the universal ribosomal protein uS4 family. In terms of assembly, part of the 30S ribosomal subunit.

Its subcellular location is the plastid. It localises to the apicoplast. In terms of biological role, one of the primary rRNA binding proteins, it binds directly to 16S rRNA where it nucleates assembly of the body of the 30S subunit. This is Small ribosomal subunit protein uS4c (rps4) from Eimeria tenella (Coccidian parasite).